We begin with the raw amino-acid sequence, 619 residues long: MKTNSSFHAAGEVATQPAWGTGEQAAQPLNGSTSRFAMSESSLADLLQKAASQYPNRAAYKFIDYDTDPAGFTETVTWWQVHRRAMIVAEELWIYASSGDRVAILAPQGLEYIIAFMGVLQAGLIAVPLPVPQFGIHDERISSALRDSAPSIILTTSSVIDEVTTYAPHACAAQGQSAPIVVAVDALDLSSSRALDPTRFERPSTAYLQYTSGSTRAPAGVVLSHKNVITNCVQLMSDYIGDSEKVPSTPVSWLPFYHDMGLMLGIILPMINQDTAVLMSPMAFLQRPARWMQLLAKHRAQISSAPNFGFELAVRRTSDDDMAGLDLGHVRTIVTGAERVNVATLRRFTERFAPFNLSETAIRPSYGLAEATVYVATAGPGRAPKSVCFDYQQLSVGQAKRTENGSEGANLVSYGAPRASTVRIVDPETRMENPAGTVGEIWVQGDNVGLGYWRNPQQTEATFRARLVTPSPGTSEGPWLRTGDLGVIFEGELFITGRIKELLVVDGANHYPEDIEATIQEITGGRVVAIAVPDDRTEKLVTIIELMKRGRTDEEEKNRLRTVKREVASAISRSHRLRVADVVMVAPGSIPVTTSGKVRRSASVERYLHHEFSRLDAMA.

This sequence belongs to the ATP-dependent AMP-binding enzyme family.

It carries out the reaction 17-(4-hydroxyphenyl)heptadecanoate + holo-[(phenol)carboxyphthiodiolenone synthase] + ATP = 17-(4-hydroxyphenyl)heptadecanoyl-[(phenol)carboxyphthiodiolenone synthase] + AMP + diphosphate. It catalyses the reaction 19-(4-hydroxyphenyl)nonadecanoate + holo-[(phenol)carboxyphthiodiolenone synthase] + ATP = 19-(4-hydroxyphenyl)nonadecanoyl-[(phenol)carboxyphthiodiolenone synthase] + AMP + diphosphate. It participates in lipid metabolism; fatty acid biosynthesis. Catalyzes the activation of long-chain fatty acids as acyl-adenylates (acyl-AMP), which are then transferred to the multifunctional polyketide synthase PpsA for further chain extension. Involved in the biosynthesis of phenolphthiocerol, which is an important intermediate in the biosynthesis of phenolic glycolipid (PGL), also called mycosid B. This is 4-hydroxyphenylalkanoate adenylyltransferase (fadD29) from Mycobacterium bovis (strain ATCC BAA-935 / AF2122/97).